Consider the following 231-residue polypeptide: High-affinity zinc uptake system ATP-binding protein ZnuC (231 aa).

The 227-residue stretch at 4 to 230 (VSLKDIVFGY…CLTWNSCDEL (227 aa)) folds into the ABC transporter domain.

Belongs to the ABC transporter superfamily. As to quaternary structure, the complex is composed of two ATP-binding proteins (ZnuC), two transmembrane proteins (ZnuB) and a solute-binding protein (ZnuA).

It localises to the cell membrane. The enzyme catalyses Zn(2+)(out) + ATP(in) + H2O(in) = Zn(2+)(in) + ADP(in) + phosphate(in) + H(+)(in). Part of the high-affinity ABC transporter complex ZnuABC involved in zinc import. Responsible for energy coupling to the transport system. ZnuABC-mediated zinc transport is required for comF expression and competence development. This is High-affinity zinc uptake system ATP-binding protein ZnuC (znuC) from Bacillus subtilis (strain 168).